Here is a 73-residue protein sequence, read N- to C-terminus: UPF0435 protein lwe1727 (73 aa).

Belongs to the UPF0435 family.

The polypeptide is UPF0435 protein lwe1727 (Listeria welshimeri serovar 6b (strain ATCC 35897 / DSM 20650 / CCUG 15529 / CIP 8149 / NCTC 11857 / SLCC 5334 / V8)).